The following is a 150-amino-acid chain: Large ribosomal subunit protein uL15 (150 aa).

Residues 1 to 15 (MNLSNLQPAEGSTHN) are compositionally biased toward polar residues. The disordered stretch occupies residues 1 to 52 (MNLSNLQPAEGSTHNQNKRLGRGEGSGKGGTSARGHKGAKSRSGYSKKIGFE). The span at 23–32 (GEGSGKGGTS) shows a compositional bias: gly residues.

This sequence belongs to the universal ribosomal protein uL15 family. Part of the 50S ribosomal subunit.

In terms of biological role, binds to the 23S rRNA. The chain is Large ribosomal subunit protein uL15 from Flavobacterium psychrophilum (strain ATCC 49511 / DSM 21280 / CIP 103535 / JIP02/86).